The primary structure comprises 380 residues: MSGPLRKHHPLLKVVNHSVIDLPVPSNISVMWNFGSLLGLCLVSQILTGLFLAMHYTADVNLAFSSVAHICRDVNYGWLLRNLHANGASFMFICLYMHIGRGLYYGSYFYVETWNIGVMLLVLTMATAFLGYVLPWGQMSFWGATVITNLFSAIPYFGPDLVQWLWGGFSVDNATLTRFFAFHFFLPFMIAGLSVVHLLFLHQTGANNPTGLAGDVDKVPFHAYFSYKDVVGFVVLLAGLVFIALFSPNLLTDPENYIPANPLVTPVHIQPEWYFLFAYAILRSIPNKLGGVVALAMSIVVLFFMPFVHSSRQTSHNFRPLAQVLFWLMVVNVLLLTWLGGQPVEYPYIFLGQAASVIYFVNILLFIPIVGYVENKLLFS.

A run of 4 helical transmembrane segments spans residues 34-54 (FGSLLGLCLVSQILTGLFLAM), 78-99 (WLLRNLHANGASFMFICLYMHI), 114-134 (WNIGVMLLVLTMATAFLGYVL), and 179-199 (FFAFHFFLPFMIAGLSVVHLL). Positions 84 and 98 each coordinate heme b. Positions 183 and 197 each coordinate heme b. An a ubiquinone-binding site is contributed by H202. A run of 4 helical transmembrane segments spans residues 227-247 (YKDVVGFVVLLAGLVFIALFS), 289-309 (LGGVVALAMSIVVLFFMPFVH), 321-341 (LAQVLFWLMVVNVLLLTWLGG), and 348-368 (YIFLGQAASVIYFVNILLFIP).

This sequence belongs to the cytochrome b family. The cytochrome bc1 complex contains 3 respiratory subunits (MT-CYB, CYC1 and UQCRFS1), 2 core proteins (UQCRC1 and UQCRC2) and probably 6 low-molecular weight proteins. Requires heme b as cofactor.

The protein resides in the mitochondrion inner membrane. Functionally, component of the ubiquinol-cytochrome c reductase complex (complex III or cytochrome b-c1 complex) that is part of the mitochondrial respiratory chain. The b-c1 complex mediates electron transfer from ubiquinol to cytochrome c. Contributes to the generation of a proton gradient across the mitochondrial membrane that is then used for ATP synthesis. This chain is Cytochrome b (MT-CYB), found in Branchiostoma lanceolatum (Common lancelet).